We begin with the raw amino-acid sequence, 87 residues long: MANTAQARKRARQSVERNKHNSSLRSMLRTAIKRVRQAIATGDKAVAGETLRKASSVIDRVADKNIIHKNKAARHKSRLAAAVKALA.

A disordered region spans residues Met1–Leu24.

This sequence belongs to the bacterial ribosomal protein bS20 family.

In terms of biological role, binds directly to 16S ribosomal RNA. The protein is Small ribosomal subunit protein bS20 of Bordetella avium (strain 197N).